A 503-amino-acid polypeptide reads, in one-letter code: T-complex protein 11 homolog (503 aa).

Basic and acidic residues predominate over residues 1–22 (MPDVKESVPPKYPGDSEGRSCK). Disordered regions lie at residues 1–42 (MPDV…PPPF) and 254–285 (DLTM…NPEP). The span at 263 to 285 (PDTSDSSSVAGPSPNEAANNPEP) shows a compositional bias: low complexity. Residues 330–349 (LTVMASVLLVASSFSGSVLF) traverse the membrane as a helical segment.

It belongs to the TCP11 family. As to quaternary structure, found in a complex at least composed of MROH2B, PRKACA isoform 2 and TCP11. Interacts with MROH2B. Interacts with PRKACA isoform 2. Isoform 2 and isoform 3 interact with ODF1 (via leucine zipper motif). Constitutively phosphorylated on serine, threonine and tyrosine residues within the head and tail regions of noncapacitated spermatozoa. Phosphorylation on tyrosine residues increases upon sperm capacitation within the acrosomal region in a protein kinase A (PKA)-dependent signaling pathway. Isoform 2 and isoform 3 are expressed in sperm. Isoform 1 is not detected in sperm (at protein level). Testis-specific. Isoform 1, isoform 2 and isoform 3 are expressed in sperm.

The protein resides in the membrane. It localises to the cell projection. The protein localises to the cilium. It is found in the flagellum. Its subcellular location is the cytoplasmic vesicle. The protein resides in the secretory vesicle. It localises to the acrosome. Plays a role in the process of sperm capacitation and acrosome reactions. Probable receptor for the putative fertilization-promoting peptide (FPP) at the sperm membrane that may modulate the activity of the adenylyl cyclase cAMP pathway. The protein is T-complex protein 11 homolog (TCP11) of Homo sapiens (Human).